The primary structure comprises 221 residues: Inositol phosphorylceramide synthase regulatory subunit KEI1 (221 aa).

4 consecutive transmembrane segments (helical) span residues 11-31, 54-74, 79-99, and 154-174; these read SFLG…ISIL, WIAY…LYLI, LLVF…TCFF, and ILIT…LASF. The segment at 176–221 is COPI vesicle-binding; that stretch reads QELLHHPKYLVDRDDVEQNLKNKPIWKRLWAKSQKGCYKLCKNLLE.

Belongs to the KEI1 family. As to quaternary structure, component of the inositol phosphorylceramide synthase complex composed of at least AUR1 and KEI1. Interacts (via C-terminal region) with COP1 and SEC21. Note=The interaction with AUR1 seems to occur with the full-length protein before cleavage by KEX2 since both full-length and short chains of KEI1 interact with AUR1. Post-translationally, the precursor protein is cleaved into two polypeptide chains, KEI1N and KEI1C. The cleavage is performed in the Golgi apparatus by the KEX2 protease which recognizes residue Arg-135. Generation of KEX2 cleavage site may have been an accidental event in evolution without specific advantages or disadvantages in IPC synthesis.

It localises to the golgi apparatus membrane. Regulatory component of the inositol phosphorylceramide (ICP) synthase which catalyzes the addition of a phosphorylinositol group onto ceramide to form inositol phosphorylceramide, an essential step in sphingolipid biosynthesis. Helps the medial Golgi localization of IPC synthase in a COPI vesicle-dependent manner. This chain is Inositol phosphorylceramide synthase regulatory subunit KEI1 (KEI1), found in Saccharomyces cerevisiae (strain ATCC 204508 / S288c) (Baker's yeast).